Consider the following 688-residue polypeptide: Polyphosphate kinase (688 aa).

Asn-45 is a binding site for ATP. Arg-375 and Arg-405 together coordinate Mg(2+). Positions 430–464 (PGLKIHAKLFLISRKENGEVVRYAHIGTGNFNEKT) constitute a PLD phosphodiesterase domain. His-435 acts as the Phosphohistidine intermediate in catalysis. ATP contacts are provided by Tyr-468, Arg-564, and His-592.

This sequence belongs to the polyphosphate kinase 1 (PPK1) family. Requires Mg(2+) as cofactor. In terms of processing, an intermediate of this reaction is the autophosphorylated ppk in which a phosphate is covalently linked to a histidine residue through a N-P bond.

The enzyme catalyses [phosphate](n) + ATP = [phosphate](n+1) + ADP. Functionally, catalyzes the reversible transfer of the terminal phosphate of ATP to form a long-chain polyphosphate (polyP). This Escherichia coli O157:H7 protein is Polyphosphate kinase.